Consider the following 151-residue polypeptide: Large ribosomal subunit protein bL9 (151 aa).

The protein belongs to the bacterial ribosomal protein bL9 family.

In terms of biological role, binds to the 23S rRNA. This is Large ribosomal subunit protein bL9 from Pelobacter propionicus (strain DSM 2379 / NBRC 103807 / OttBd1).